The following is a 343-amino-acid chain: Holliday junction branch migration complex subunit RuvB (343 aa).

Positions 1–185 (MEQEDFNIRE…FGINLHLEYY (185 aa)) are large ATPase domain (RuvB-L). Residues Leu24, Arg25, Gly66, Lys69, Thr70, Thr71, 132 to 134 (EDY), Arg175, Tyr185, and Arg222 contribute to the ATP site. Mg(2+) is bound at residue Thr70. The segment at 186–256 (DDDILSNIIR…IAQFALEALN (71 aa)) is small ATPAse domain (RuvB-S). Residues 259 to 343 (KYGLDEIDNK…YSSQKTLFND (85 aa)) form a head domain (RuvB-H) region. The DNA site is built by Arg314 and Arg319.

Belongs to the RuvB family. Homohexamer. Forms an RuvA(8)-RuvB(12)-Holliday junction (HJ) complex. HJ DNA is sandwiched between 2 RuvA tetramers; dsDNA enters through RuvA and exits via RuvB. An RuvB hexamer assembles on each DNA strand where it exits the tetramer. Each RuvB hexamer is contacted by two RuvA subunits (via domain III) on 2 adjacent RuvB subunits; this complex drives branch migration. In the full resolvosome a probable DNA-RuvA(4)-RuvB(12)-RuvC(2) complex forms which resolves the HJ.

Its subcellular location is the cytoplasm. It carries out the reaction ATP + H2O = ADP + phosphate + H(+). In terms of biological role, the RuvA-RuvB-RuvC complex processes Holliday junction (HJ) DNA during genetic recombination and DNA repair, while the RuvA-RuvB complex plays an important role in the rescue of blocked DNA replication forks via replication fork reversal (RFR). RuvA specifically binds to HJ cruciform DNA, conferring on it an open structure. The RuvB hexamer acts as an ATP-dependent pump, pulling dsDNA into and through the RuvAB complex. RuvB forms 2 homohexamers on either side of HJ DNA bound by 1 or 2 RuvA tetramers; 4 subunits per hexamer contact DNA at a time. Coordinated motions by a converter formed by DNA-disengaged RuvB subunits stimulates ATP hydrolysis and nucleotide exchange. Immobilization of the converter enables RuvB to convert the ATP-contained energy into a lever motion, pulling 2 nucleotides of DNA out of the RuvA tetramer per ATP hydrolyzed, thus driving DNA branch migration. The RuvB motors rotate together with the DNA substrate, which together with the progressing nucleotide cycle form the mechanistic basis for DNA recombination by continuous HJ branch migration. Branch migration allows RuvC to scan DNA until it finds its consensus sequence, where it cleaves and resolves cruciform DNA. The sequence is that of Holliday junction branch migration complex subunit RuvB from Bacteroides thetaiotaomicron (strain ATCC 29148 / DSM 2079 / JCM 5827 / CCUG 10774 / NCTC 10582 / VPI-5482 / E50).